A 122-amino-acid chain; its full sequence is Phospholipase A2 crotoxin basic subunit CBd (122 aa).

Disulfide bonds link Cys-26/Cys-115, Cys-28/Cys-44, Cys-43/Cys-95, Cys-49/Cys-122, Cys-50/Cys-88, Cys-57/Cys-81, and Cys-75/Cys-86. 3 residues coordinate Ca(2+): Tyr-27, Gly-29, and Gly-31. Residue His-47 is part of the active site. Ca(2+) is bound at residue Asp-48. The active site involves Asp-89.

This sequence belongs to the phospholipase A2 family. Group II subfamily. D49 sub-subfamily. Heterodimer of one of the acidic (CA1, CA2, CA3 or CA4) and one of the basic (CBa1, CBa2, CBb, CBc or CBd) subunits; non-covalently linked. The acidic subunit is non-toxic, without enzymatic activity and comprises 3 peptides that are cross-linked by 5 disulfide bridges. The basic subunit is toxic, has phospholipase A2 activity and is composed of a single chain. Multiple variants of each subunit give different crotoxin complexes that can be subdivided into 2 classes: (1) those of high toxicity, low PLA2 activity (CBb, CBc and CBd linked with high affinity to any CA) and high stability (K(d)=4.5 nM) and (2) those of moderate toxicity, high PLA2 activity (CBa2 linked with low affinity to any CA) and low stability (K(d)=25 nM). Interacts with crotoxin inhibitor from Crotalus serum (CICS); the interaction leads to dissociation of the CA-CB heterodimer and to inhibition of PLA2 activity of the CB subunit. Interacts with human NBD1 domain of CFTR. Ca(2+) is required as a cofactor. In terms of tissue distribution, expressed by the venom gland.

It localises to the secreted. It carries out the reaction a 1,2-diacyl-sn-glycero-3-phosphocholine + H2O = a 1-acyl-sn-glycero-3-phosphocholine + a fatty acid + H(+). Heterodimer CA-CB: Crotoxin is a potent presynaptic neurotoxin that possesses phospholipase A2 (PLA2) activity and exerts a lethal action by blocking neuromuscular transmission. It consists of a non-covalent association of a basic and weakly toxic PLA2 subunit (CBa2, CBb, CBc, or CBd), with a small acidic, non-enzymatic and non-toxic subunit (CA1, CA2, CA3 or CA4). The complex acts by binding to a specific 48-kDa protein (R48) receptor located on presynaptic membranes, forming a transient ternary complex CA-CB-R48, followed by dissociation of the CA-CB complex and release of the CA subunit. At equilibrium, only the CB subunits remain associated with the specific crotoxin receptor. In addition to neurotoxicity, crotoxin has been found to exert myotoxicity, nephrotoxicity, and cardiovascular toxicity. Moreover, anti-inflammatory, immunomodulatory, anti-tumor and analgesic effects of crotoxin have also been reported. In terms of biological role, monomer CBd: The basic subunit of crotoxin is a snake venom phospholipase A2 (PLA2) that exhibits weak neurotoxicity (10-fold less than the heterodimer) and very strong anticoagulant effects by binding to factor Xa (F10) and inhibiting the prothrombinase activity. In addition, it shows the same effects described for the heterodimer and binds the nucleotide-binding domain (NBD1) of CFTR chloride channels and increases the channel current. PLA2 catalyzes the calcium-dependent hydrolysis of the 2-acyl groups in 3-sn-phosphoglycerides. In Crotalus durissus terrificus (South American rattlesnake), this protein is Phospholipase A2 crotoxin basic subunit CBd.